The following is an 87-amino-acid chain: Small ribosomal subunit protein bS20 (87 aa).

The interval 1–28 (MANSAQARKRARQASAQRDHNMSQRSEL) is disordered. The segment covering 17 to 28 (QRDHNMSQRSEL) has biased composition (basic and acidic residues).

The protein belongs to the bacterial ribosomal protein bS20 family.

Functionally, binds directly to 16S ribosomal RNA. This is Small ribosomal subunit protein bS20 from Thiobacillus denitrificans (strain ATCC 25259 / T1).